We begin with the raw amino-acid sequence, 156 residues long: Small ribosomal subunit protein uS7 (156 aa).

The protein belongs to the universal ribosomal protein uS7 family. As to quaternary structure, part of the 30S ribosomal subunit. Contacts proteins S9 and S11.

In terms of biological role, one of the primary rRNA binding proteins, it binds directly to 16S rRNA where it nucleates assembly of the head domain of the 30S subunit. Is located at the subunit interface close to the decoding center, probably blocks exit of the E-site tRNA. The sequence is that of Small ribosomal subunit protein uS7 from Prochlorococcus marinus (strain MIT 9312).